We begin with the raw amino-acid sequence, 175 residues long: Cytochrome c homolog (175 aa).

Residues 1 to 8 (MTGKELNK) are Cytoplasmic-facing. The helical; Signal-anchor transmembrane segment at 9–29 (IVAAILFASLIAMIVRFVANI) threads the bilayer. At 30–175 (LYKPNLQVLN…LFLKNYVHDK (146 aa)) the chain is on the periplasmic side. Heme c-binding residues include Cys84, Cys87, His88, and Met150.

The protein belongs to the cytochrome c family. Post-translationally, binds 1 heme c group covalently per subunit.

The protein resides in the cell membrane. In terms of biological role, may be involved in electron transfer from bc1 complex to aa3. The sequence is that of Cytochrome c homolog (cycM) from Rickettsia typhi (strain ATCC VR-144 / Wilmington).